A 455-amino-acid chain; its full sequence is tRNA modification GTPase MnmE (455 aa).

Residues R26, E86, and R125 each contribute to the (6S)-5-formyl-5,6,7,8-tetrahydrofolate site. Positions 222–376 (GLKTAIIGRP…VEEKINQIFF (155 aa)) constitute a TrmE-type G domain. K(+) is bound at residue N232. GTP-binding positions include 232 to 237 (NVGKSS), 251 to 257 (TDIAGTT), and 276 to 279 (DTAG). Residue S236 coordinates Mg(2+). K(+) is bound by residues T251, I253, and T256. T257 is a Mg(2+) binding site. K455 is a binding site for (6S)-5-formyl-5,6,7,8-tetrahydrofolate.

This sequence belongs to the TRAFAC class TrmE-Era-EngA-EngB-Septin-like GTPase superfamily. TrmE GTPase family. As to quaternary structure, homodimer. Heterotetramer of two MnmE and two MnmG subunits. K(+) is required as a cofactor.

It is found in the cytoplasm. Its function is as follows. Exhibits a very high intrinsic GTPase hydrolysis rate. Involved in the addition of a carboxymethylaminomethyl (cmnm) group at the wobble position (U34) of certain tRNAs, forming tRNA-cmnm(5)s(2)U34. This is tRNA modification GTPase MnmE from Lactococcus lactis subsp. cremoris (strain MG1363).